The primary structure comprises 96 residues: MRHYEVMIILDPNQDERTVTPSLDKFLEAIRKDGGKVEKVDVWGKRRLAYPINKKEEGIYAVVELECESHSVLELDRRLNLNDSILRTKVLRTDSK.

This sequence belongs to the bacterial ribosomal protein bS6 family.

In terms of biological role, binds together with bS18 to 16S ribosomal RNA. This chain is Small ribosomal subunit protein bS6, found in Corynebacterium aurimucosum (strain ATCC 700975 / DSM 44827 / CIP 107346 / CN-1) (Corynebacterium nigricans).